A 160-amino-acid chain; its full sequence is Small ribosomal subunit protein uS7 (160 aa).

It belongs to the universal ribosomal protein uS7 family. Part of the 30S ribosomal subunit. Contacts proteins S9 and S11.

Functionally, one of the primary rRNA binding proteins, it binds directly to 16S rRNA where it nucleates assembly of the head domain of the 30S subunit. Is located at the subunit interface close to the decoding center, probably blocks exit of the E-site tRNA. The protein is Small ribosomal subunit protein uS7 of Rickettsia prowazekii (strain Madrid E).